A 300-amino-acid polypeptide reads, in one-letter code: Cation-efflux pump FieF (300 aa).

A run of 4 helical transmembrane segments spans residues 12-32 (AALA…VAWY), 40-60 (LAAL…LLVV), 82-102 (AALA…LTGF), and 114-134 (PGVG…LVTY). The Zn(2+) site is built by D45 and D49. Zn(2+) contacts are provided by H153 and D157. The next 2 helical transmembrane spans lie at 155 to 175 (QSDV…WYGF) and 178 to 198 (ADAL…LRMG).

It belongs to the cation diffusion facilitator (CDF) transporter (TC 2.A.4) family. FieF subfamily. Homodimer.

It is found in the cell inner membrane. It catalyses the reaction Zn(2+)(in) + H(+)(out) = Zn(2+)(out) + H(+)(in). The enzyme catalyses Cd(2+)(in) + H(+)(out) = Cd(2+)(out) + H(+)(in). It carries out the reaction Fe(2+)(in) + H(+)(out) = Fe(2+)(out) + H(+)(in). Functionally, divalent metal cation transporter which exports Zn(2+), Cd(2+) and possibly Fe(2+). May be involved in zinc and iron detoxification by efflux. The protein is Cation-efflux pump FieF of Serratia proteamaculans (strain 568).